Reading from the N-terminus, the 81-residue chain is Adipogenin (81 aa).

A helical transmembrane segment spans residues 16-36; sequence FLVFWLCLPVALLLFLLIIWL.

The protein belongs to the adipogenin family. Highly expressed in subcutaneous, perirenal and mesecentric adipose tissue.

It is found in the membrane. It localises to the nucleus. Functionally, plays a role in stimulating adipocyte differentiation and development. The sequence is that of Adipogenin from Bos taurus (Bovine).